The sequence spans 602 residues: Exo-poly-alpha-D-galacturonosidase (602 aa).

The signal sequence occupies residues 1 to 27 (MKVITFSRRSALASIVATCLMSTPALA). The 118-residue stretch at 32–149 (APQKLQIPTL…TVTTTTTAVP (118 aa)) folds into the Fibronectin type-III domain. The active-site Proton donor is Asp395. His428 is an active-site residue.

Belongs to the glycosyl hydrolase 28 family.

The protein resides in the secreted. It catalyses the reaction [(1-&gt;4)-alpha-D-galacturonosyl](n) + H2O = alpha-D-galacturonosyl-(1-&gt;4)-D-galacturonate + [(1-&gt;4)-alpha-D-galacturonosyl](n-2). In terms of biological role, contributes significantly to bacterial utilization of polygalacturonate and the induction of pectate lyase in the presence of extracellular pectic polymers. This Dickeya chrysanthemi (Pectobacterium chrysanthemi) protein is Exo-poly-alpha-D-galacturonosidase (pehX).